A 197-amino-acid polypeptide reads, in one-letter code: Guanylate kinase (197 aa).

Position 2 is an N-acetylserine (S2). The Guanylate kinase-like domain maps to 4-186; that stretch reads PRPVVLSGPS…AYAELKEALS (183 aa). 14 to 19 contributes to the ATP binding site; the sequence is GAGKST. 37-51 contributes to the substrate binding site; the sequence is SHTTRNPRPGEENGK. Active-site residues include R44, R137, and R148. An ATP-binding site is contributed by R137. An ATP-binding site is contributed by 171-172; that stretch reads ND.

It belongs to the guanylate kinase family. Monomer. Interacts with RD3. As to expression, widely expressed.

Its subcellular location is the photoreceptor inner segment. It localises to the cytoplasm. The protein resides in the cytosol. It is found in the mitochondrion. The catalysed reaction is GMP + ATP = GDP + ADP. Its activity is regulated as follows. Up-regulated by RD3. Its function is as follows. Catalyzes the phosphorylation of GMP to GDP. Essential enzyme for recycling GMP and indirectly, cyclic GMP (cGMP). Involved in the cGMP metabolism in photoreceptors. It may also have a role in the survival and growth progression of some tumors. In addition to its physiological role, GUK1 is essential for converting prodrugs used for the treatment of cancers and viral infections into their pharmacologically active metabolites, most notably acyclovir, ganciclovir, and 6-thioguanine and its closely related analog 6-mercaptopurine. The sequence is that of Guanylate kinase from Homo sapiens (Human).